Reading from the N-terminus, the 233-residue chain is Small heat shock protein hspF (233 aa).

Residues 129-233 (IPLFTFFEPL…ILLITVNKFL (105 aa)) enclose the sHSP domain.

The protein belongs to the small heat shock protein (HSP20) family.

In Dictyostelium discoideum (Social amoeba), this protein is Small heat shock protein hspF (hspF-1).